The following is a 403-amino-acid chain: Large ribosomal subunit protein uL3 (403 aa).

The disordered stretch occupies residues 1-37; that stretch reads MSHRKFSAPRHGSLGFLPRKRSSRHRGKVKSFPKDDP. The residue at position 13 (Ser-13) is a Phosphoserine. A compositionally biased stretch (basic residues) spans 18–31; sequence PRKRSSRHRGKVKS. Lys-39 is covalently cross-linked (Glycyl lysine isopeptide (Lys-Gly) (interchain with G-Cter in SUMO2)). Lys-136 bears the N6-acetyllysine mark. Residues Lys-224 and Lys-226 each participate in a glycyl lysine isopeptide (Lys-Gly) (interchain with G-Cter in SUMO2) cross-link. His-245 carries the post-translational modification Tele-methylhistidine. Lys-286 and Lys-294 each carry N6-acetyllysine; alternate. Residue Lys-286 forms a Glycyl lysine isopeptide (Lys-Gly) (interchain with G-Cter in SUMO2); alternate linkage. Lys-294 is covalently cross-linked (Glycyl lysine isopeptide (Lys-Gly) (interchain with G-Cter in SUMO1); alternate). Ser-304 bears the Phosphoserine mark. N6-acetyllysine; alternate is present on Lys-366. A Glycyl lysine isopeptide (Lys-Gly) (interchain with G-Cter in SUMO2); alternate cross-link involves residue Lys-366. An N6-acetyllysine modification is found at Lys-373. Glycyl lysine isopeptide (Lys-Gly) (interchain with G-Cter in SUMO2) cross-links involve residues Lys-386, Lys-393, and Lys-399.

The protein belongs to the universal ribosomal protein uL3 family. As to quaternary structure, component of the large ribosomal subunit. Interacts with DHX33. Constitutively monomethylated at His-245 by METTL18. Methylation at His-245 regulates translation elongation by slowing ribosome traversal on tyrosine codons: slower elongation provides enough time for proper folding of synthesized proteins and prevents cellular aggregation of tyrosine-rich proteins. It is not required for incorporation of RPL3 into ribosomes.

It is found in the nucleus. The protein resides in the nucleolus. It localises to the cytoplasm. Functionally, component of the large ribosomal subunit. The ribosome is a large ribonucleoprotein complex responsible for the synthesis of proteins in the cell. The polypeptide is Large ribosomal subunit protein uL3 (RPL3) (Homo sapiens (Human)).